The sequence spans 480 residues: Argininosuccinate lyase (480 aa).

Positions 1-20 (MTQQDGGQAGQAEPTKLWGG) are disordered.

It belongs to the lyase 1 family. Argininosuccinate lyase subfamily.

It localises to the cytoplasm. The catalysed reaction is 2-(N(omega)-L-arginino)succinate = fumarate + L-arginine. It participates in amino-acid biosynthesis; L-arginine biosynthesis; L-arginine from L-ornithine and carbamoyl phosphate: step 3/3. The sequence is that of Argininosuccinate lyase from Saccharopolyspora erythraea (strain ATCC 11635 / DSM 40517 / JCM 4748 / NBRC 13426 / NCIMB 8594 / NRRL 2338).